We begin with the raw amino-acid sequence, 532 residues long: FAD-dependent monooxygenase hkm7 (532 aa).

Residues 191–193 (RIY) and Asp-261 each bind FAD.

It belongs to the PheA/TfdB FAD monooxygenase family.

It functions in the pathway secondary metabolite biosynthesis. Functionally, FAD-dependent monooxygenase; part of the gene cluster that mediates the biosynthesis of hancockiamides, an unusual new family of N-cinnamoylated piperazines. The NRPS hkm10 and the NmrA-like reductase hkm9 are proposed to convert two molecules of L-Phe to the intermediary piperazine called xenocockiamide A. Xenocockiamide A is then converted to hancockiamide D via a series of hydroxylations and O-methylations. The tyrosinase hkm6 may catalyze an aromatic hydroxylation, then the 2-oxoglutarate-dependent Fe(II) dioxygenase hkm4 and the FAD-dependent phenol hydroxylase hkm7 may catalyze consecutive hydroxylations to install 2 more hydroxy groups, and the methyltransferase hkm8 probably catalyzes two methylations using 2 molecules of S-adenosyl-L-methionine (SAM). The NRPS hkm11 activates and transfers trans-cinnamate supplied by the PAL hkm12 to hancockiamide D and produces hancockiamide A. NRPS Hkm11 has the flexibility to tolerate the bulky hancockiamide G as a substrate and the absence of the acetyl-transferase hkm3 opens up the opportunity for hkm11 to introduce a second N-cinnamoyl moiety. The cytochrome P450 monooxygenase hkm5 catalyzes the methylenedioxy bridge formation, converting hancockiamide A into hancockiamide G. Hkm5 can also convert hancockiamide B into hancockiamide C, and hancockiamide D into hancockiamide H. The N-acetyltransferase hkm3 finally transfers an acetyl group to 1-N of piperazine, converting hancockiamide A into hancockiamide B and hancockiamide G into hancockiamide C. The polypeptide is FAD-dependent monooxygenase hkm7 (Aspergillus hancockii).